The primary structure comprises 462 residues: Glutamate-1-semialdehyde 2,1-aminomutase (462 aa).

The disordered stretch occupies residues 178–200 (DDPQRPASPRSQSSRGLPSSPGV). Residues 182-192 (RPASPRSQSSR) are compositionally biased toward low complexity. K297 carries the N6-(pyridoxal phosphate)lysine modification.

Belongs to the class-III pyridoxal-phosphate-dependent aminotransferase family. HemL subfamily. Homodimer. It depends on pyridoxal 5'-phosphate as a cofactor.

The protein resides in the cytoplasm. The enzyme catalyses (S)-4-amino-5-oxopentanoate = 5-aminolevulinate. It participates in porphyrin-containing compound metabolism; protoporphyrin-IX biosynthesis; 5-aminolevulinate from L-glutamyl-tRNA(Glu): step 2/2. The polypeptide is Glutamate-1-semialdehyde 2,1-aminomutase (hemL) (Mycobacterium bovis (strain ATCC BAA-935 / AF2122/97)).